The following is a 317-amino-acid chain: Ribosomal protein L11 methyltransferase (317 aa).

Positions 158, 179, 201, and 244 each coordinate S-adenosyl-L-methionine.

This sequence belongs to the methyltransferase superfamily. PrmA family.

Its subcellular location is the cytoplasm. The enzyme catalyses L-lysyl-[protein] + 3 S-adenosyl-L-methionine = N(6),N(6),N(6)-trimethyl-L-lysyl-[protein] + 3 S-adenosyl-L-homocysteine + 3 H(+). Its function is as follows. Methylates ribosomal protein L11. The sequence is that of Ribosomal protein L11 methyltransferase from Streptococcus pyogenes serotype M5 (strain Manfredo).